The following is a 475-amino-acid chain: Methylenetetrahydrofolate--tRNA-(uracil-5-)-methyltransferase TrmFO (475 aa).

13 to 18 is a binding site for FAD; the sequence is GAGLAG.

Belongs to the MnmG family. TrmFO subfamily. It depends on FAD as a cofactor.

The protein resides in the cytoplasm. It carries out the reaction uridine(54) in tRNA + (6R)-5,10-methylene-5,6,7,8-tetrahydrofolate + NADH + H(+) = 5-methyluridine(54) in tRNA + (6S)-5,6,7,8-tetrahydrofolate + NAD(+). The catalysed reaction is uridine(54) in tRNA + (6R)-5,10-methylene-5,6,7,8-tetrahydrofolate + NADPH + H(+) = 5-methyluridine(54) in tRNA + (6S)-5,6,7,8-tetrahydrofolate + NADP(+). Its function is as follows. Catalyzes the folate-dependent formation of 5-methyl-uridine at position 54 (M-5-U54) in all tRNAs. The sequence is that of Methylenetetrahydrofolate--tRNA-(uracil-5-)-methyltransferase TrmFO from Bradyrhizobium diazoefficiens (strain JCM 10833 / BCRC 13528 / IAM 13628 / NBRC 14792 / USDA 110).